The primary structure comprises 570 residues: Urease subunit alpha (570 aa).

The 440-residue stretch at 131–570 (GGMDSHIHFI…LPMAQRYFLF (440 aa)) folds into the Urease domain. Residues histidine 136, histidine 138, and lysine 219 each contribute to the Ni(2+) site. At lysine 219 the chain carries N6-carboxylysine. Substrate is bound at residue histidine 221. Positions 248 and 274 each coordinate Ni(2+). The active-site Proton donor is the histidine 322. Ni(2+) is bound at residue aspartate 362.

It belongs to the metallo-dependent hydrolases superfamily. Urease alpha subunit family. Heterotrimer of UreA (gamma), UreB (beta) and UreC (alpha) subunits. Three heterotrimers associate to form the active enzyme. Requires Ni cation as cofactor. Post-translationally, carboxylation allows a single lysine to coordinate two nickel ions.

It is found in the cytoplasm. The enzyme catalyses urea + 2 H2O + H(+) = hydrogencarbonate + 2 NH4(+). It functions in the pathway nitrogen metabolism; urea degradation; CO(2) and NH(3) from urea (urease route): step 1/1. The sequence is that of Urease subunit alpha from Rhizobium johnstonii (strain DSM 114642 / LMG 32736 / 3841) (Rhizobium leguminosarum bv. viciae).